Reading from the N-terminus, the 240-residue chain is Mitochondrial inner membrane protease ATP23 (240 aa).

His-140 contacts a divalent metal cation. Glu-141 is an active-site residue. A divalent metal cation is bound at residue His-144.

It belongs to the peptidase M76 family.

The protein resides in the mitochondrion inner membrane. Has a dual role in the assembly of mitochondrial ATPase. Acts as a protease that removes N-terminal residues of mitochondrial ATPase CF(0) subunit 6 at the intermembrane space side. Also involved in the correct assembly of the membrane-embedded ATPase CF(0) particle, probably mediating association of subunit 6 with the subunit 9 ring. The sequence is that of Mitochondrial inner membrane protease ATP23 (ATP23) from Scheffersomyces stipitis (strain ATCC 58785 / CBS 6054 / NBRC 10063 / NRRL Y-11545) (Yeast).